The chain runs to 365 residues: Uroporphyrinogen decarboxylase (365 aa).

The segment covering 1–17 (MSANDSPSGQQTTTSAS) has biased composition (polar residues). The interval 1 to 20 (MSANDSPSGQQTTTSASLDA) is disordered. Substrate-binding positions include 48-52 (RQAGR), D97, Y172, S227, and H341.

It belongs to the uroporphyrinogen decarboxylase family. As to quaternary structure, homodimer.

It localises to the cytoplasm. It catalyses the reaction uroporphyrinogen III + 4 H(+) = coproporphyrinogen III + 4 CO2. The protein operates within porphyrin-containing compound metabolism; protoporphyrin-IX biosynthesis; coproporphyrinogen-III from 5-aminolevulinate: step 4/4. In terms of biological role, catalyzes the decarboxylation of four acetate groups of uroporphyrinogen-III to yield coproporphyrinogen-III. In Streptomyces griseus subsp. griseus (strain JCM 4626 / CBS 651.72 / NBRC 13350 / KCC S-0626 / ISP 5235), this protein is Uroporphyrinogen decarboxylase.